The sequence spans 422 residues: DNA-binding transcriptional activator AdeR (422 aa).

This sequence belongs to the CdaR family.

In terms of biological role, activates ald expression in response to alanine availability and is important for normal sporulation in B.subtilis. This chain is DNA-binding transcriptional activator AdeR, found in Bacillus subtilis (strain 168).